The following is a 314-amino-acid chain: tRNA pseudouridine synthase B (314 aa).

Histidine 43 provides a ligand contact to substrate. Catalysis depends on aspartate 48, which acts as the Nucleophile. Substrate-binding residues include tyrosine 76, tyrosine 179, and leucine 200.

The protein belongs to the pseudouridine synthase TruB family. Type 1 subfamily.

The enzyme catalyses uridine(55) in tRNA = pseudouridine(55) in tRNA. Responsible for synthesis of pseudouridine from uracil-55 in the psi GC loop of transfer RNAs. The chain is tRNA pseudouridine synthase B from Salmonella arizonae (strain ATCC BAA-731 / CDC346-86 / RSK2980).